We begin with the raw amino-acid sequence, 865 residues long: MGSIYRSEHMKLCQIFFQSESAYQCVAELGELGMAQFIDLNEEQNAYTRKFVNEVRRCDEMERKINFVEDEITKDLVPIPDYDEHIPAPQPKHMGEMEANLEKLEEELVQINKNCKVLKNNHVQLLEMKAVLEHVTSLLDPHSKREAAMSISEAARGEAGPISFGMKDEFDKPVKDEKELKFVTGVVKRSKAIAFERFLWRLSRAKVFAKFIQIQEQTELFSNEFEDKCVFILFFSGEQLRAKVKKICDGFQAKCYTVPENPAERTKLLLNIKVQTTDMKAVIEKTLDYRSKCIHAAATNLRKWGIMLLKLKSIFHTLNMFSVDVTQKCLIAECWVPEADIGQVKNSLHMGTIHSGSTVPAILNEMETDKYPPTYFKLNKFTQGFQNIVDAYGIANYREVNPAPWTIISFPFLFAVMFGDAGHGIIMLIAASAFVIFEKKLISMKIKDEIFNTFFGGRYVVLLMGMFAIYTGFIYNDFYSKSVNIFGSSWVNPYNQTLLANMDAQGADSNTDLSLTFPPEIAFNHDYGPYPFGVDPVWNLAINRLNFLNPMKMKTSILLGISQMAFGIMLSLMNHIGNRSVVDIVFVFIPQCLFLGCIFVYLCLQVLMKWIFFYVKPAYIFGRLYPGSNCAPSLLIGLINMFMVKSRDASFAHDVGTAAGKEWVIVNGQNVTYTINDQCYLQQWYPNQSLVELILLLIAVVSVPVMLLVKPFYIRWRHSRGLHIDLGHGPDEHGEFNFGDIMVHQAIHTIEFVLGCVSHTASYLRLWALSLAHAQLSDVLWTMVLRMSLTMGGWGGSAAITILFYFIFSILSVCILILMEGLSAFLHAIRLHWVEFQSKFYGGTGIQFEPFCFTKIIRVYEGLDQ.

Residues 1 to 409 (MGSIYRSEHM…VNPAPWTIIS (409 aa)) are Cytoplasmic-facing. Positions 51–121 (FVNEVRRCDE…NKNCKVLKNN (71 aa)) form a coiled coil. A helical membrane pass occupies residues 410–430 (FPFLFAVMFGDAGHGIIMLIA). The Extracellular segment spans residues 431–453 (ASAFVIFEKKLISMKIKDEIFNT). The helical transmembrane segment at 454–474 (FFGGRYVVLLMGMFAIYTGFI) threads the bilayer. The Cytoplasmic segment spans residues 475–556 (YNDFYSKSVN…FLNPMKMKTS (82 aa)). The chain crosses the membrane as a helical span at residues 557–577 (ILLGISQMAFGIMLSLMNHIG). A glycan (N-linked (GlcNAc...) asparagine) is linked at N578. The Extracellular portion of the chain corresponds to 578–583 (NRSVVD). The helical transmembrane segment at 584–604 (IVFVFIPQCLFLGCIFVYLCL) threads the bilayer. The Cytoplasmic portion of the chain corresponds to 605-623 (QVLMKWIFFYVKPAYIFGR). Residues 624-644 (LYPGSNCAPSLLIGLINMFMV) traverse the membrane as a helical segment. Residues 645–688 (KSRDASFAHDVGTAAGKEWVIVNGQNVTYTINDQCYLQQWYPNQ) lie on the Extracellular side of the membrane. 2 N-linked (GlcNAc...) asparagine glycosylation sites follow: N670 and N687. A helical transmembrane segment spans residues 689–709 (SLVELILLLIAVVSVPVMLLV). Topologically, residues 710–798 (KPFYIRWRHS…LTMGGWGGSA (89 aa)) are cytoplasmic. Residues 799 to 819 (AITILFYFIFSILSVCILILM) form a helical membrane-spanning segment. Residues 820-865 (EGLSAFLHAIRLHWVEFQSKFYGGTGIQFEPFCFTKIIRVYEGLDQ) lie on the Extracellular side of the membrane.

Belongs to the V-ATPase 116 kDa subunit family. In terms of assembly, V-ATPase is a heteromultimeric enzyme made up of two complexes: the ATP-hydrolytic V1 complex and the proton translocation V0 complex. The V1 complex consists of three catalytic AB heterodimers that form a heterohexamer, three peripheral stalks each consisting of EG heterodimers, one central rotor including subunits D and F, and the regulatory subunits C and H. The proton translocation complex V0 consists of the proton transport subunit a, a ring of proteolipid subunits c9c'', rotary subunit d, subunits e and f, and the accessory subunits vah-19/Ac45 and vah-20/PRR. Interacts with V-type proton ATPase subunit C vha-11.

The protein localises to the apical cell membrane. Subunit of the V0 complex of vacuolar(H+)-ATPase (V-ATPase), a multisubunit enzyme composed of a peripheral complex (V1) that hydrolyzes ATP and a membrane integral complex (V0) that translocates protons. V-ATPase is responsible for acidifying and maintaining the pH of intracellular compartments and in some cell types, is targeted to the plasma membrane, where it is responsible for acidifying the extracellular environment. In the intestine, required for the rhythmic defecation behavior by promoting acidification in the gut lumen following defecation. Also, luminal acidification is required for nutrient uptake. The protein is V-type proton ATPase 116 kDa subunit a 3 of Caenorhabditis elegans.